Reading from the N-terminus, the 279-residue chain is Four and a half LIM domains protein 2 (279 aa).

Residues Cys-7–Cys-31 form a C4-type zinc finger. 3 consecutive LIM zinc-binding domains span residues Cys-40 to Cys-92, Cys-101 to Cys-153, and Cys-162 to Cys-212. Lys-78 participates in a covalent cross-link: Glycyl lysine isopeptide (Lys-Gly) (interchain with G-Cter in SUMO2). Residues Lys-167 and Lys-220 each participate in a glycyl lysine isopeptide (Lys-Gly) (interchain with G-Cter in SUMO2) cross-link. In terms of domain architecture, LIM zinc-binding 4 spans Cys-221–Cys-275. The residue at position 238 (Ser-238) is a Phosphoserine.

As to quaternary structure, interacts with ZNF638 and TTN/titin. Interacts with E4F1. Interacts with GRB7. Interacts with SIRT1 and FOXO1. Interacts with CEFIP. Interacts with calcineurin. Interacts with FOXK1. In terms of tissue distribution, highly expressed in heart but also detectable in brain and skeletal muscle.

The protein localises to the cytoplasm. The protein resides in the nucleus. Its subcellular location is the myofibril. It localises to the sarcomere. It is found in the z line. Its function is as follows. May function as a molecular transmitter linking various signaling pathways to transcriptional regulation. Negatively regulates the transcriptional repressor E4F1 and may function in cell growth. Inhibits the transcriptional activity of FOXO1 and its apoptotic function by enhancing the interaction of FOXO1 with SIRT1 and FOXO1 deacetylation. Negatively regulates the calcineurin/NFAT signaling pathway in cardiomyocytes. This Mus musculus (Mouse) protein is Four and a half LIM domains protein 2 (Fhl2).